The chain runs to 119 residues: uncharacterized protein (119 aa).

The next 2 helical transmembrane spans lie at 61–80 (LISA…LLSV) and 87–103 (VVGV…VDII).

It localises to the membrane. This is an uncharacterized protein from Saccharomyces cerevisiae (strain ATCC 204508 / S288c) (Baker's yeast).